A 373-amino-acid polypeptide reads, in one-letter code: Putative F-box protein At1g76830 (373 aa).

In terms of domain architecture, F-box spans 4 to 49 (ITSFENLPEELKREILLRMSPNSLVTCSRVSKKLASMIRTKSFKEL).

The protein is Putative F-box protein At1g76830 of Arabidopsis thaliana (Mouse-ear cress).